The primary structure comprises 186 residues: NADH-quinone oxidoreductase subunit B (186 aa).

[4Fe-4S] cluster-binding residues include C44, C45, C110, and C139.

This sequence belongs to the complex I 20 kDa subunit family. As to quaternary structure, NDH-1 is composed of 14 different subunits. Subunits NuoB, C, D, E, F, and G constitute the peripheral sector of the complex. Requires [4Fe-4S] cluster as cofactor.

Its subcellular location is the cell inner membrane. It carries out the reaction a quinone + NADH + 5 H(+)(in) = a quinol + NAD(+) + 4 H(+)(out). Functionally, NDH-1 shuttles electrons from NADH, via FMN and iron-sulfur (Fe-S) centers, to quinones in the respiratory chain. The immediate electron acceptor for the enzyme in this species is believed to be ubiquinone. Couples the redox reaction to proton translocation (for every two electrons transferred, four hydrogen ions are translocated across the cytoplasmic membrane), and thus conserves the redox energy in a proton gradient. The protein is NADH-quinone oxidoreductase subunit B of Leptospira biflexa serovar Patoc (strain Patoc 1 / Ames).